The following is a 401-amino-acid chain: UPF0242 protein CCA_01002 (401 aa).

The protein belongs to the UPF0242 family.

The sequence is that of UPF0242 protein CCA_01002 from Chlamydia caviae (strain ATCC VR-813 / DSM 19441 / 03DC25 / GPIC) (Chlamydophila caviae).